Reading from the N-terminus, the 189-residue chain is ATP synthase subunit delta (189 aa).

It belongs to the ATPase delta chain family. As to quaternary structure, F-type ATPases have 2 components, F(1) - the catalytic core - and F(0) - the membrane proton channel. F(1) has five subunits: alpha(3), beta(3), gamma(1), delta(1), epsilon(1). F(0) has three main subunits: a(1), b(2) and c(10-14). The alpha and beta chains form an alternating ring which encloses part of the gamma chain. F(1) is attached to F(0) by a central stalk formed by the gamma and epsilon chains, while a peripheral stalk is formed by the delta and b chains.

It localises to the cell inner membrane. Its function is as follows. F(1)F(0) ATP synthase produces ATP from ADP in the presence of a proton or sodium gradient. F-type ATPases consist of two structural domains, F(1) containing the extramembraneous catalytic core and F(0) containing the membrane proton channel, linked together by a central stalk and a peripheral stalk. During catalysis, ATP synthesis in the catalytic domain of F(1) is coupled via a rotary mechanism of the central stalk subunits to proton translocation. Functionally, this protein is part of the stalk that links CF(0) to CF(1). It either transmits conformational changes from CF(0) to CF(1) or is implicated in proton conduction. In Methylorubrum extorquens (strain CM4 / NCIMB 13688) (Methylobacterium extorquens), this protein is ATP synthase subunit delta.